Consider the following 201-residue polypeptide: 3-isopropylmalate dehydratase small subunit (201 aa).

It belongs to the LeuD family. LeuD type 1 subfamily. As to quaternary structure, heterodimer of LeuC and LeuD.

The enzyme catalyses (2R,3S)-3-isopropylmalate = (2S)-2-isopropylmalate. It functions in the pathway amino-acid biosynthesis; L-leucine biosynthesis; L-leucine from 3-methyl-2-oxobutanoate: step 2/4. Functionally, catalyzes the isomerization between 2-isopropylmalate and 3-isopropylmalate, via the formation of 2-isopropylmaleate. This chain is 3-isopropylmalate dehydratase small subunit, found in Erwinia tasmaniensis (strain DSM 17950 / CFBP 7177 / CIP 109463 / NCPPB 4357 / Et1/99).